Here is a 287-residue protein sequence, read N- to C-terminus: Leukocyte-associated immunoglobulin-like receptor 1 (287 aa).

Positions 1 to 21 are cleaved as a signal peptide; that stretch reads MSPHPTALLGLVLCLAQTIHT. Residues 22 to 165 lie on the Extracellular side of the membrane; it reads QEEDLPRPSI…SQGLKAEHLY (144 aa). The Ig-like C2-type domain maps to 29–117; the sequence is PSISAEPGTV…KWSEQSDYLE (89 aa). Cys49 and Cys101 are joined by a disulfide. Asn69 is a glycosylation site (N-linked (GlcNAc...) asparagine). A disordered region spans residues 121–155; that stretch reads KESSGGPDSPDTEPGSSAGPTQRPSDNSHNEHAPA. Residues 134 to 145 are compositionally biased toward polar residues; sequence PGSSAGPTQRPS. Residues 166-186 form a helical membrane-spanning segment; it reads ILIGVSVVFLFCLLLLVLFCL. Residues 187–287 lie on the Cytoplasmic side of the membrane; that stretch reads HRQNQIKQGP…SITYAAVARH (101 aa). Residues 192-211 are disordered; the sequence is IKQGPPRSKDEEQKPQQRPD. Basic and acidic residues predominate over residues 198–208; it reads RSKDEEQKPQQ. 2 short sequence motifs (ITIM motif) span residues 249–254 and 279–284; these read VTYAQL and ITYAAV. A phosphotyrosine mark is found at Tyr251 and Tyr281.

As to quaternary structure, interacts with SH2 domains of tyrosine-protein phosphatases PTPN6 and PTPN11. The interaction with PTPN6 is constitutive. Interacts with the SH2 domain of CSK. Binds with high affinity to extracellular matrix collagens, the interaction is functionally important. Phosphorylation at Tyr-251 and Tyr-281 activates it. May be phosphorylated by LCK. Post-translationally, N-glycosylated. As to expression, expressed on the majority of peripheral mononuclear cells, including natural killer (NK) cells, T-cells, B-cells, monocytes, and dendritic cells. Highly expressed in naive T-cells and B-cells but no expression on germinal center B-cells. Abnormally low expression in naive B-cells from HIV-1 infected patients. Very low expression in NK cells from a patient with chronic active Epstein-Barr virus infection.

The protein resides in the cell membrane. Functions as an inhibitory receptor that plays a constitutive negative regulatory role on cytolytic function of natural killer (NK) cells, B-cells and T-cells. Activation by Tyr phosphorylation results in recruitment and activation of the phosphatases PTPN6 and PTPN11. It also reduces the increase of intracellular calcium evoked by B-cell receptor ligation. May also play its inhibitory role independently of SH2-containing phosphatases. Modulates cytokine production in CD4+ T-cells, down-regulating IL2 and IFNG production while inducing secretion of transforming growth factor beta. Also down-regulates IgG and IgE production in B-cells as well as IL8, IL10 and TNF secretion. Inhibits proliferation and induces apoptosis in myeloid leukemia cell lines as well as prevents nuclear translocation of NF-kappa-B p65 subunit/RELA and phosphorylation of I-kappa-B alpha/CHUK in these cells. Inhibits the differentiation of peripheral blood precursors towards dendritic cells. The sequence is that of Leukocyte-associated immunoglobulin-like receptor 1 (LAIR1) from Homo sapiens (Human).